The primary structure comprises 240 residues: Membrane-spanning 4-domains subfamily A member 7 (240 aa).

Topologically, residues 1 to 47 are cytoplasmic; that stretch reads MLLQSQTMGVSHSFTPKGITIPQREKPGHMYQNEDYLQNGLPTETTV. A helical membrane pass occupies residues 48–68; sequence LGTVQILCCLLISSLGAILVF. The Extracellular segment spans residues 69–83; it reads APYPSHFNPAISTTL. The helical transmembrane segment at 84–104 threads the bilayer; the sequence is MSGYPFLGALCFGITGSLSII. The Cytoplasmic segment spans residues 105–121; it reads SGKQSTKPFDLSSLTSN. Residues 122–142 traverse the membrane as a helical segment; that stretch reads AVSSVTAGAGLFLLADSMVAL. The Extracellular portion of the chain corresponds to 143-178; that stretch reads RTASQHCGSEMDYLSSLPYSEYYYPIYEIKDCLLTS. The helical transmembrane segment at 179 to 199 threads the bilayer; sequence VSLTGVLVVMLIFTVLELLLA. Residues 200 to 240 lie on the Cytoplasmic side of the membrane; sequence AYSSVFWWKQLYSNNPGSSFSSTQSQDHIQQVKKSSSRSWI. The tract at residues 218-240 is disordered; sequence SFSSTQSQDHIQQVKKSSSRSWI.

It belongs to the MS4A family. As to expression, ubiquitous expression in normal tissues. Expression is more elevated in adult liver, lung, spleen, and heart than in their fetal counterparts, and is higher in normal tissues than in the cancerous tissue or cell lines. Low levels of expression were detected in the promonocytic stage, whereas high levels of expression were detected in mature monocytes.

Its subcellular location is the membrane. Functionally, may be involved in signal transduction as a component of a multimeric receptor complex. The sequence is that of Membrane-spanning 4-domains subfamily A member 7 (MS4A7) from Homo sapiens (Human).